The following is a 145-amino-acid chain: 3-hydroxyacyl-[acyl-carrier-protein] dehydratase FabZ (145 aa).

H49 is an active-site residue.

Belongs to the thioester dehydratase family. FabZ subfamily.

Its subcellular location is the cytoplasm. The enzyme catalyses a (3R)-hydroxyacyl-[ACP] = a (2E)-enoyl-[ACP] + H2O. In terms of biological role, involved in unsaturated fatty acids biosynthesis. Catalyzes the dehydration of short chain beta-hydroxyacyl-ACPs and long chain saturated and unsaturated beta-hydroxyacyl-ACPs. The protein is 3-hydroxyacyl-[acyl-carrier-protein] dehydratase FabZ of Rickettsia massiliae (strain Mtu5).